Reading from the N-terminus, the 121-residue chain is Alpha-lactalbumin (121 aa).

A C-type lysozyme domain is found at 1–121; sequence IDYRKCQASQ…CLEDLDQWRC (121 aa). Intrachain disulfides connect Cys-6–Cys-121, Cys-28–Cys-112, Cys-61–Cys-77, and Cys-73–Cys-91. Asn-44 is a glycosylation site (N-linked (GlcNAc...) asparagine). Residues Lys-79, Asp-82, Asp-84, Asp-87, and Asp-88 each coordinate Ca(2+).

The protein belongs to the glycosyl hydrolase 22 family. Lactose synthase (LS) is a heterodimer of a catalytic component, beta1,4-galactosyltransferase (beta4Gal-T1) and a regulatory component, alpha-lactalbumin (LA). In terms of tissue distribution, mammary gland specific. Secreted in milk.

Its subcellular location is the secreted. Regulatory subunit of lactose synthase, changes the substrate specificity of galactosyltransferase in the mammary gland making glucose a good acceptor substrate for this enzyme. This enables LS to synthesize lactose, the major carbohydrate component of milk. In other tissues, galactosyltransferase transfers galactose onto the N-acetylglucosamine of the oligosaccharide chains in glycoproteins. This chain is Alpha-lactalbumin (LALBA), found in Notamacropus rufogriseus (Red-necked wallaby).